Reading from the N-terminus, the 333-residue chain is Alpha-N-acetylgalactosaminide alpha-2,6-sialyltransferase 6 (333 aa).

The span at 1–12 shows a compositional bias: polar residues; it reads MACSRPPSQCDP. The interval 1 to 27 is disordered; that stretch reads MACSRPPSQCDPTTLPPGPPAGRWPLP. The Cytoplasmic segment spans residues 1 to 43; that stretch reads MACSRPPSQCDPTTLPPGPPAGRWPLPFSRRRREMSSNKEQRS. A helical; Signal-anchor for type II membrane protein transmembrane segment spans residues 44–64; sequence AVFVILFALITILILYSSNSA. Residues 65-333 lie on the Lumenal side of the membrane; that stretch reads NEVFHYGSLR…GITFSHPSWT (269 aa). N-linked (GlcNAc...) asparagine glycosylation occurs at asparagine 98. Cysteines 108 and 256 form a disulfide.

This sequence belongs to the glycosyltransferase 29 family. As to expression, widely expressed, the gene expression is most abundant in colon, brain, liver, and heart.

The protein localises to the golgi apparatus membrane. It catalyses the reaction a ganglioside GM1b (d18:1(4E)) + CMP-N-acetyl-beta-neuraminate = a ganglioside GD1alpha (d18:1(4E)) + CMP + H(+). The enzyme catalyses a ganglioside GD1a (d18:1(4E)) + CMP-N-acetyl-beta-neuraminate = a ganglioside GT1aalpha (d18:1(4E)) + CMP + H(+). It carries out the reaction a ganglioside GT1b (d18:1(4E)) + CMP-N-acetyl-beta-neuraminate = a ganglioside GQ1balpha (d18:1(4E)) + CMP + H(+). The catalysed reaction is N-acetyl-alpha-neuraminosyl-(2-&gt;3)-beta-D-galactosyl-(1-&gt;3)-N-acetyl-beta-D-glucosaminyl-(1-&gt;3)-beta-D-galactosyl-(1-&gt;4)-beta-D-glucosyl-(1&lt;-&gt;1')-N-acyl-sphing-4-enine + CMP-N-acetyl-beta-neuraminate = N-acetyl-alpha-neuraminosyl-(2-&gt;3)-beta-D-galactosyl-(1-&gt;3)-[N-acetyl-alpha-neuraminosyl-(2-&gt;6)]-N-acetyl-beta-D-glucosaminyl-(1-&gt;3)-beta-D-galactosyl-(1-&gt;4)-beta-D-glucosyl-(1&lt;-&gt;1')-N-acyl-sphing-4-enine + CMP + H(+). It catalyses the reaction a globoside MSGG + CMP-N-acetyl-beta-neuraminate = a globoside DSGG + CMP + H(+). The enzyme catalyses 3-O-[alpha-Neu5Ac-(2-&gt;3)-beta-D-Gal-(1-&gt;3)-alpha-D-GalNAc]-L-Ser-[protein] + CMP-N-acetyl-beta-neuraminate = a 3-O-{alpha-Neu5Ac-(2-&gt;3)-beta-D-Gal-(1-&gt;3)-[alpha-Neu5Ac-(2-&gt;6)]-alpha-D-GalNAc}-L-seryl-[protein] + CMP + H(+). It carries out the reaction 3-O-[alpha-Neu5Ac-(2-&gt;3)-beta-D-Gal-(1-&gt;3)-alpha-D-GalNAc]-L-Thr-[protein] + CMP-N-acetyl-beta-neuraminate = a 3-O-{alpha-Neu5Ac-(2-&gt;3)-beta-D-Gal-(1-&gt;3)-[alpha-Neu5Ac-(2-&gt;6)]-alpha-D-GalNAc}-L-threonyl-[protein] + CMP + H(+). Transfers the sialyl group (N-acetyl-alpha-neuraminyl or NeuAc) from CMP-NeuAc onto glycolipids, forming an alpha-2,6-linkage. Produces branched type disialyl structures by transfer of a sialyl group onto the GalNAc or GlcNAc residue inside backbone core chains having a terminal sialic acid with an alpha-2,3-linkage on Gal. ST6GalNAcVI prefers glycolipids to glycoproteins, predominantly catalyzing the biosynthesis of ganglioside GD1alpha from GM1b. Also has activity toward GD1a and GT1b, and can generate DSGG (disialylgalactosylgloboside) from MSGG (monosialylgalactosylgloboside). Besides GMb1, MSGG and other glycolipids, it shows activity towards sialyl Lc4Cer generating disialyl Lc4Cer, which can lead to the synthesis of disialyl Lewis a (Le(a)), suggested to be a cancer-associated antigen. The polypeptide is Alpha-N-acetylgalactosaminide alpha-2,6-sialyltransferase 6 (St6galnac6) (Mus musculus (Mouse)).